The following is a 550-amino-acid chain: MDSQRNLLVIALLFVSFMIWQTWEQDKAPKPQVQQTTQTTTTAAGSAASQGVPASGQGKLITVKTDVLSLTINTRGGDIEQALLLAYPKELGSSEPFQLLETTPNFVYQAQSGLTGRNGPDNPNNNKGRPLYNTERDTYVLADGQDELVIPMTFTDEAGNAFTKTFALKRGQYAVYVGYDVKNAGTQPLEISSFGQLKQTIDLPSHRDTGSSNFALHTFRGAAYSTPDEKYEKYKFDTIADDENLNVNAKGGWVAMLQQYFATAWVPASNVTSNFYTADLGHGVAAIGYKSEPVQVQPGQTAKLASTLWVGPEIQDKMAQVAPHLDLTVDYGWLWFISQPLFKLLKWIHSFLGNWGFSIIAITFIVRGVMYPLTKAQYTSMAKMRLLQPKIQAMRERLGDDKQRMSQEMMALYKAEKVNPLGGCFPLLIQMPIFLALYYMLMGSVELRHAPFALWIHDLSAQDPYYILPILMGATMFFIQKMSPTTVTDPMQQKIMTFMPVIFTVFFLWFPSGLVLYYIVSNLVTILQQQLIYRGLEKRGLHSREKKKKA.

A helical membrane pass occupies residues 6–26 (NLLVIALLFVSFMIWQTWEQD). 2 disordered regions span residues 28–54 (APKP…GVPA) and 111–132 (QSGL…RPLY). Low complexity predominate over residues 30-52 (KPQVQQTTQTTTTAAGSAASQGV). Residues 111 to 127 (QSGLTGRNGPDNPNNNK) are compositionally biased toward polar residues. A run of 4 helical transmembrane segments spans residues 346–366 (KWIH…TFIV), 421–441 (LGGC…YYML), 459–479 (LSAQ…MFFI), and 500–520 (PVIF…YYIV).

It belongs to the OXA1/ALB3/YidC family. Type 1 subfamily. As to quaternary structure, interacts with the Sec translocase complex via SecD. Specifically interacts with transmembrane segments of nascent integral membrane proteins during membrane integration.

Its subcellular location is the cell inner membrane. Its function is as follows. Required for the insertion and/or proper folding and/or complex formation of integral membrane proteins into the membrane. Involved in integration of membrane proteins that insert both dependently and independently of the Sec translocase complex, as well as at least some lipoproteins. Aids folding of multispanning membrane proteins. The polypeptide is Membrane protein insertase YidC (Cronobacter sakazakii (strain ATCC BAA-894) (Enterobacter sakazakii)).